An 817-amino-acid polypeptide reads, in one-letter code: Leucine--tRNA ligase (817 aa).

The short motif at 42-52 is the 'HIGH' region element; that stretch reads PYPSGRLHMGH. The short motif at 576 to 580 is the 'KMSKS' region element; the sequence is KMSKS. Lysine 579 contacts ATP.

The protein belongs to the class-I aminoacyl-tRNA synthetase family.

It localises to the cytoplasm. It catalyses the reaction tRNA(Leu) + L-leucine + ATP = L-leucyl-tRNA(Leu) + AMP + diphosphate. This Thioalkalivibrio sulfidiphilus (strain HL-EbGR7) protein is Leucine--tRNA ligase.